A 221-amino-acid chain; its full sequence is UPF0502 protein Sputcn32_1644 (221 aa).

This sequence belongs to the UPF0502 family.

The chain is UPF0502 protein Sputcn32_1644 from Shewanella putrefaciens (strain CN-32 / ATCC BAA-453).